We begin with the raw amino-acid sequence, 622 residues long: Microtubule-associated protein 70-1 (622 aa).

The disordered stretch occupies residues 1–27; sequence MSDVSADGGFLSAEQATTPVAIPTPYP. Positions 66 to 365 form a coiled coil; the sequence is DPVKVELNRL…LAISDRAAKS (300 aa). The interval 250-483 is required for targeting to microtubules; it reads ILDRMHRQKV…YSFNKACDET (234 aa). Disordered regions lie at residues 388-512 and 579-622; these read SSIS…TEDN and AAMR…RSTQ. 2 stretches are compositionally biased toward polar residues: residues 400-425 and 432-453; these read SMSN…SNGF and MRNS…TSKS. Basic and acidic residues-rich tracts occupy residues 479 to 501 and 579 to 591; these read ACDE…EKPP and AAMR…DNRA. A coiled-coil region spans residues 541–590; sequence DKDDAIEMLAKKVETLTKAMEVEAKKMRREVAAMEKEVAAMRVDKDQDNR. A compositionally biased stretch (polar residues) spans 594 to 605; that stretch reads SSNTKPSSNTAQ.

This sequence belongs to the MAP70 family. Interacts with MAP70.5 and itself.

The protein resides in the cytoplasm. It localises to the cytoskeleton. The protein localises to the phragmoplast. It is found in the spindle. Functionally, plant-specific protein that interact with microtubules. In association with MAP70.5, is essential for the normal banding pattern of secondary cell wall and for the proper development of xylem tracheary elements and wood formation. The sequence is that of Microtubule-associated protein 70-1 (MAP70.1) from Arabidopsis thaliana (Mouse-ear cress).